The sequence spans 734 residues: MASRFPKFSQGLAQDPTTRRIWFGIATAHDFESHDDITEERLYQQIFASHFGQLAIIFLWTSGNLFHVAWQGNFETWVNDPLHIRPIAHAIWDPHFGQPAIEAFTRGGAPGPVNIAYSGVYQWWYTIGLRTNEDLYIGALFLMFCSALFLIAGRLHLQPKRKPSVSWFKNAESRLNHHLSGLFGVSSLAWTGHLVHVALPESRGIHVRWTNFLNVLPYPQGLGPLFGGQWILYSQNPDSSSHLFGTSEGAGTAILTLLGGFHPQTQSLWLTDIAHHHLAIALVFLIAGHMYRTNFGIGHSIKDILEAHTPPGGFLGRGHKSLYNTINNSLHFQLGLALASLGVVTSLVAQHMYSLPAYAFIAQDFTTQAALYTHHQYIAGFIMTGAFAHGAIFFIRDYNPEQNKDNVLARMLEHKEAIISHLSWASLFLGFHTLGLYVHNDVMLAFGTPEKQILIEPIFAQWIQSAHGKSFYGFDVLLASTKDPAFVAGKSLWLPGWLKAVNDNKNSLFLTIGPGDFLVHHAIALGLHTTTLILVKGALDARGSKLMPDKKDFGYSFPCDGPGRGGTCDISAWDAFYLAVFWMLNTVGWVTFYWHWKHITLWQGNAAQFNESSTYLMGWLRDYLWLNSSQLINGYNPFGMNTLSVWAWMFLFGHLVWATGFMFLISWRGYWQELIETLVWAHERTPLANLVRWKDKPVALSIVQARLVGLVHFSVGYIFTYAAFLIASTSGKFG.

The next 8 helical transmembrane spans lie at 46 to 69 (IFASHFGQLAIIFLWTSGNLFHVA), 135 to 158 (LYIGALFLMFCSALFLIAGRLHLQ), 175 to 199 (LNHHLSGLFGVSSLAWTGHLVHVAL), 273 to 291 (IAHHHLAIALVFLIAGHMY), 330 to 353 (LHFQLGLALASLGVVTSLVAQHMY), 369 to 395 (AALYTHHQYIAGFIMTGAFAHGAIFFI), 417 to 439 (AIISHLSWASLFLGFHTLGLYVH), and 517 to 535 (FLVHHAIALGLHTTTLILV). Residues Cys-559 and Cys-568 each contribute to the [4Fe-4S] cluster site. 2 consecutive transmembrane segments (helical) span residues 575-596 (AFYLAVFWMLNTVGWVTFYWHW) and 643-665 (LSVWAWMFLFGHLVWATGFMFLI). Residues His-654, Met-662, and Tyr-670 each contribute to the chlorophyll a site. Trp-671 contacts phylloquinone. A helical membrane pass occupies residues 707 to 727 (LVGLVHFSVGYIFTYAAFLIA).

It belongs to the PsaA/PsaB family. As to quaternary structure, the PsaA/B heterodimer binds the P700 chlorophyll special pair and subsequent electron acceptors. PSI consists of a core antenna complex that captures photons, and an electron transfer chain that converts photonic excitation into a charge separation. The eukaryotic PSI reaction center is composed of at least 11 subunits. Requires P700 is a chlorophyll a/chlorophyll a' dimer, A0 is one or more chlorophyll a, A1 is one or both phylloquinones and FX is a shared 4Fe-4S iron-sulfur center. as cofactor.

The protein localises to the plastid. It is found in the chloroplast thylakoid membrane. The catalysed reaction is reduced [plastocyanin] + hnu + oxidized [2Fe-2S]-[ferredoxin] = oxidized [plastocyanin] + reduced [2Fe-2S]-[ferredoxin]. Functionally, psaA and PsaB bind P700, the primary electron donor of photosystem I (PSI), as well as the electron acceptors A0, A1 and FX. PSI is a plastocyanin-ferredoxin oxidoreductase, converting photonic excitation into a charge separation, which transfers an electron from the donor P700 chlorophyll pair to the spectroscopically characterized acceptors A0, A1, FX, FA and FB in turn. Oxidized P700 is reduced on the lumenal side of the thylakoid membrane by plastocyanin. This is Photosystem I P700 chlorophyll a apoprotein A2 from Gnetum parvifolium (Small-leaved jointfir).